Here is a 257-residue protein sequence, read N- to C-terminus: Ribosome maturation factor RimP (257 aa).

Residues 182–257 (LRRGGPPAAD…SRLKDRDSLH (76 aa)) form a disordered region. Residues 191 to 205 (DEADEAEEAEDEEVA) are compositionally biased toward acidic residues. A compositionally biased stretch (low complexity) spans 224–236 (KASPAAKPQKQAR).

Belongs to the RimP family.

It is found in the cytoplasm. In terms of biological role, required for maturation of 30S ribosomal subunits. The polypeptide is Ribosome maturation factor RimP (Methylobacterium radiotolerans (strain ATCC 27329 / DSM 1819 / JCM 2831 / NBRC 15690 / NCIMB 10815 / 0-1)).